The chain runs to 158 residues: Nuclear cap-binding protein subunit 2 (158 aa).

Residues tyrosine 17, tyrosine 40, 109–113 (RADWD), 120–124 (RQYGR), and 130–131 (QV) each bind mRNA. The RRM domain occupies 37-115 (CTLYVGNLSY…RVIRADWDAG (79 aa)). Residues 123–158 (GRGKHGGQVRDEYRKDYDPERGGYNRAIAQKGGDRQ) form a disordered region. A compositionally biased stretch (basic and acidic residues) spans 130–145 (QVRDEYRKDYDPERGG).

The protein belongs to the RRM NCBP2 family. Component of the nuclear cap-binding complex (CBC), a heterodimer composed of ncbp-1 and ncbp-2 that interacts with m7GpppG-capped RNA.

Its subcellular location is the nucleus. In terms of biological role, component of the cap-binding complex (CBC), which binds co-transcriptionally to the 5' cap of pre-mRNAs and is involved in various processes such as pre-mRNA splicing and RNA-mediated gene silencing (RNAi). The CBC complex is involved in miRNA-mediated RNA interference and is required for primary microRNAs (miRNAs) processing. In the CBC complex, ncbp-2 recognizes and binds capped RNAs (m7GpppG-capped RNA) but requires ncbp-1 to stabilize the movement of its N-terminal loop and lock the CBC into a high affinity cap-binding state with the cap structure. The chain is Nuclear cap-binding protein subunit 2 (ncbp-2) from Caenorhabditis elegans.